The sequence spans 226 residues: MVKYLSQSEAIELDLDLFEMFHVGQLMELAGLSCADAVAECFPAQTHPRVLVVCGPGNNGGDGLVCARHLSLMGYQPTVYYPKPTLMSLYENLTNQCHHMEIPSVKKCPSLSDAEEDYDLILDALFGFGFKPPVREDFVPLVKMMQETKVPIASVDIPSGWDVEKGKQSECDFEPKLLISLTAPKLCAEHFKGEHHYLGGRFVPPALQRKYQLNLPDYGSKLVVRL.

The region spanning 10-215 (AIELDLDLFE…ALQRKYQLNL (206 aa)) is the YjeF N-terminal domain. 58–62 (NNGGD) lines the (6S)-NADPHX pocket. K(+)-binding residues include N59 and D123. Residues 127 to 133 (GFGFKPP) and D156 contribute to the (6S)-NADPHX site. S159 is a K(+) binding site.

The protein belongs to the NnrE/AIBP family. K(+) is required as a cofactor.

The catalysed reaction is (6R)-NADHX = (6S)-NADHX. It carries out the reaction (6R)-NADPHX = (6S)-NADPHX. Catalyzes the epimerization of the S- and R-forms of NAD(P)HX, a damaged form of NAD(P)H that is a result of enzymatic or heat-dependent hydration. This is a prerequisite for the S-specific NAD(P)H-hydrate dehydratase to allow the repair of both epimers of NAD(P)HX. This chain is NAD(P)H-hydrate epimerase, found in Drosophila persimilis (Fruit fly).